Consider the following 231-residue polypeptide: MGHKSNPIGMRLQINRTWDSRWFAQGGDYGQLLLEDIKIRKFIMKTLPQAAISKVVIERPAKLCRISIYAARPGVIIGKKGADIEKLRKKLDSMTESGVSLNIVEIRKPEIDAQLVAQGIADQLERRVAFRRAMKRAVQSALRLGAQGVRITCGGRLGGAEIARTEWYREGRVPLHTLRANVDYAEAEAHTAYGVCGIKVWIFKGEIMAHDPLAQDRLMVEAQTSGVRPTR.

The region spanning isoleucine 39–arginine 107 is the KH type-2 domain.

Belongs to the universal ribosomal protein uS3 family. In terms of assembly, part of the 30S ribosomal subunit. Forms a tight complex with proteins S10 and S14.

Functionally, binds the lower part of the 30S subunit head. Binds mRNA in the 70S ribosome, positioning it for translation. This chain is Small ribosomal subunit protein uS3, found in Zymomonas mobilis subsp. mobilis (strain ATCC 31821 / ZM4 / CP4).